Consider the following 316-residue polypeptide: 4-hydroxy-3-methylbut-2-enyl diphosphate reductase (316 aa).

Residue C12 coordinates [4Fe-4S] cluster. Positions 41 and 74 each coordinate (2E)-4-hydroxy-3-methylbut-2-enyl diphosphate. 2 residues coordinate dimethylallyl diphosphate: H41 and H74. The isopentenyl diphosphate site is built by H41 and H74. C96 provides a ligand contact to [4Fe-4S] cluster. H124 provides a ligand contact to (2E)-4-hydroxy-3-methylbut-2-enyl diphosphate. Position 124 (H124) interacts with dimethylallyl diphosphate. H124 is a binding site for isopentenyl diphosphate. E126 acts as the Proton donor in catalysis. T167 lines the (2E)-4-hydroxy-3-methylbut-2-enyl diphosphate pocket. C197 is a [4Fe-4S] cluster binding site. S225, S226, N227, and S269 together coordinate (2E)-4-hydroxy-3-methylbut-2-enyl diphosphate. The dimethylallyl diphosphate site is built by S225, S226, N227, and S269. Isopentenyl diphosphate contacts are provided by S225, S226, N227, and S269.

Belongs to the IspH family. In terms of assembly, homodimer. [4Fe-4S] cluster serves as cofactor.

It catalyses the reaction isopentenyl diphosphate + 2 oxidized [2Fe-2S]-[ferredoxin] + H2O = (2E)-4-hydroxy-3-methylbut-2-enyl diphosphate + 2 reduced [2Fe-2S]-[ferredoxin] + 2 H(+). The enzyme catalyses dimethylallyl diphosphate + 2 oxidized [2Fe-2S]-[ferredoxin] + H2O = (2E)-4-hydroxy-3-methylbut-2-enyl diphosphate + 2 reduced [2Fe-2S]-[ferredoxin] + 2 H(+). It participates in isoprenoid biosynthesis; dimethylallyl diphosphate biosynthesis; dimethylallyl diphosphate from (2E)-4-hydroxy-3-methylbutenyl diphosphate: step 1/1. Its pathway is isoprenoid biosynthesis; isopentenyl diphosphate biosynthesis via DXP pathway; isopentenyl diphosphate from 1-deoxy-D-xylulose 5-phosphate: step 6/6. Catalyzes the conversion of 1-hydroxy-2-methyl-2-(E)-butenyl 4-diphosphate (HMBPP) into a mixture of isopentenyl diphosphate (IPP) and dimethylallyl diphosphate (DMAPP). Acts in the terminal step of the DOXP/MEP pathway for isoprenoid precursor biosynthesis. This chain is 4-hydroxy-3-methylbut-2-enyl diphosphate reductase, found in Enterobacter sp. (strain 638).